Reading from the N-terminus, the 490-residue chain is Protein nucleotidyltransferase YdiU (490 aa).

Positions 94, 96, 97, 117, 129, 130, 180, and 187 each coordinate ATP. D256 (proton acceptor) is an active-site residue. The Mg(2+) site is built by N257 and D266. Residue D266 participates in ATP binding.

It belongs to the SELO family. It depends on Mg(2+) as a cofactor. Mn(2+) is required as a cofactor.

It carries out the reaction L-seryl-[protein] + ATP = 3-O-(5'-adenylyl)-L-seryl-[protein] + diphosphate. The enzyme catalyses L-threonyl-[protein] + ATP = 3-O-(5'-adenylyl)-L-threonyl-[protein] + diphosphate. The catalysed reaction is L-tyrosyl-[protein] + ATP = O-(5'-adenylyl)-L-tyrosyl-[protein] + diphosphate. It catalyses the reaction L-histidyl-[protein] + UTP = N(tele)-(5'-uridylyl)-L-histidyl-[protein] + diphosphate. It carries out the reaction L-seryl-[protein] + UTP = O-(5'-uridylyl)-L-seryl-[protein] + diphosphate. The enzyme catalyses L-tyrosyl-[protein] + UTP = O-(5'-uridylyl)-L-tyrosyl-[protein] + diphosphate. Nucleotidyltransferase involved in the post-translational modification of proteins. It can catalyze the addition of adenosine monophosphate (AMP) or uridine monophosphate (UMP) to a protein, resulting in modifications known as AMPylation and UMPylation. The protein is Protein nucleotidyltransferase YdiU of Clostridium perfringens (strain 13 / Type A).